A 162-amino-acid chain; its full sequence is Large ribosomal subunit protein bL9 (162 aa).

The protein belongs to the bacterial ribosomal protein bL9 family.

Functionally, binds to the 23S rRNA. This Chlorobaculum parvum (strain DSM 263 / NCIMB 8327) (Chlorobium vibrioforme subsp. thiosulfatophilum) protein is Large ribosomal subunit protein bL9.